A 426-amino-acid polypeptide reads, in one-letter code: Serine--tRNA ligase (426 aa).

230–232 lines the L-serine pocket; it reads TAE. ATP is bound at residue 261–263; the sequence is RSE. Glutamate 284 is an L-serine binding site. Residue 348 to 351 coordinates ATP; that stretch reads EISS. Serine 384 provides a ligand contact to L-serine.

The protein belongs to the class-II aminoacyl-tRNA synthetase family. Type-1 seryl-tRNA synthetase subfamily. In terms of assembly, homodimer. The tRNA molecule binds across the dimer.

The protein localises to the cytoplasm. It catalyses the reaction tRNA(Ser) + L-serine + ATP = L-seryl-tRNA(Ser) + AMP + diphosphate + H(+). It carries out the reaction tRNA(Sec) + L-serine + ATP = L-seryl-tRNA(Sec) + AMP + diphosphate + H(+). The protein operates within aminoacyl-tRNA biosynthesis; selenocysteinyl-tRNA(Sec) biosynthesis; L-seryl-tRNA(Sec) from L-serine and tRNA(Sec): step 1/1. Catalyzes the attachment of serine to tRNA(Ser). Is also able to aminoacylate tRNA(Sec) with serine, to form the misacylated tRNA L-seryl-tRNA(Sec), which will be further converted into selenocysteinyl-tRNA(Sec). This Erythrobacter litoralis (strain HTCC2594) protein is Serine--tRNA ligase.